The following is a 98-amino-acid chain: Derivative of benzaldehyde biosynthesis cluster protein C (98 aa).

It belongs to the YciI family.

Its pathway is secondary metabolite biosynthesis. Functionally, part of the gene cluster that mediates the biosynthesis of the antibiotic 2,4-dihydroxy-3-methyl-6-(2-oxopropyl)benzaldehyde (DHMBA) and its derivatives. The direct non-reducing polyketide synthase dbaI product is 2,4-dihydroxy-3-methyl-6-(2-oxopropyl)benzaldehyde (DHMBA), produced by condensation of one acetyl-CoA starter unit with 4 malonyl-CoA units and one methylation step. The FAD-dependent monooxygenase dbaH is responsible for the synthesis of yellow pigments derived from the oxidation of DHMBA. The roles of dbaB, C, E and F have still to be determined. In Emericella nidulans (strain FGSC A4 / ATCC 38163 / CBS 112.46 / NRRL 194 / M139) (Aspergillus nidulans), this protein is Derivative of benzaldehyde biosynthesis cluster protein C.